Here is a 100-residue protein sequence, read N- to C-terminus: Small ribosomal subunit protein uS14c (100 aa).

It belongs to the universal ribosomal protein uS14 family. In terms of assembly, part of the 30S ribosomal subunit.

It is found in the plastid. It localises to the chloroplast. Binds 16S rRNA, required for the assembly of 30S particles. This Nephroselmis olivacea (Green alga) protein is Small ribosomal subunit protein uS14c.